The primary structure comprises 591 residues: V-type ATP synthase alpha chain (591 aa).

242 to 249 provides a ligand contact to ATP; it reads GPFGAGKT.

The protein belongs to the ATPase alpha/beta chains family.

The catalysed reaction is ATP + H2O + 4 H(+)(in) = ADP + phosphate + 5 H(+)(out). Its function is as follows. Produces ATP from ADP in the presence of a proton gradient across the membrane. The V-type alpha chain is a catalytic subunit. The protein is V-type ATP synthase alpha chain (atpA) of Chlamydia muridarum (strain MoPn / Nigg).